The chain runs to 198 residues: Glycerol-3-phosphate acyltransferase (198 aa).

A run of 5 helical transmembrane segments spans residues 6–26 (MLPVALLIGYLLGSIPFGLIL), 56–78 (LAAATLLGDALKGTAAVIIAGYL), 83–101 (AAMLAGLGAFLGHLFPVWL), 113–133 (IGILIGLLWPYAIFFCLVWLA), and 154–174 (IVLWAFGHTALAALFALLTLL).

The protein belongs to the PlsY family. As to quaternary structure, probably interacts with PlsX.

It is found in the cell inner membrane. It carries out the reaction an acyl phosphate + sn-glycerol 3-phosphate = a 1-acyl-sn-glycero-3-phosphate + phosphate. It functions in the pathway lipid metabolism; phospholipid metabolism. In terms of biological role, catalyzes the transfer of an acyl group from acyl-phosphate (acyl-PO(4)) to glycerol-3-phosphate (G3P) to form lysophosphatidic acid (LPA). This enzyme utilizes acyl-phosphate as fatty acyl donor, but not acyl-CoA or acyl-ACP. This chain is Glycerol-3-phosphate acyltransferase, found in Bradyrhizobium sp. (strain ORS 278).